We begin with the raw amino-acid sequence, 223 residues long: Flagellar L-ring protein 2 (223 aa).

The N-terminal stretch at 1 to 17 is a signal peptide; that stretch reads MKWLSKSWAVAVVLLVG. The N-palmitoyl cysteine moiety is linked to residue C18. A lipid anchor (S-diacylglycerol cysteine) is attached at C18.

Belongs to the FlgH family. In terms of assembly, the basal body constitutes a major portion of the flagellar organelle and consists of four rings (L,P,S, and M) mounted on a central rod.

The protein resides in the cell outer membrane. It localises to the bacterial flagellum basal body. Assembles around the rod to form the L-ring and probably protects the motor/basal body from shearing forces during rotation. This Vibrio parahaemolyticus serotype O3:K6 (strain RIMD 2210633) protein is Flagellar L-ring protein 2.